Here is a 131-residue protein sequence, read N- to C-terminus: Classical arabinogalactan protein 1 (131 aa).

The first 22 residues, 1-22 (MAFSKSLVFVLLAALLISSAVA), serve as a signal peptide directing secretion. The interval 22–110 (AQSPAPAPSN…APGPAQGGAV (89 aa)) is disordered. The segment covering 50–60 (APAPEVSPSPS) has biased composition (pro residues). A compositionally biased stretch (low complexity) spans 61–72 (PAAALTPESSAS). The GPI-anchor amidated glycine moiety is linked to residue glycine 108. Positions 109-131 (AVSNKFASFGSVAVMLTAAVLVI) are cleaved as a propeptide — removed in mature form.

The protein belongs to the classical AGP family. In terms of processing, O-glycosylated on the hydroxyproline residues. As to expression, predominantly expressed in flowers and at a lower level in roots and leaves.

It is found in the cell membrane. Functionally, proteoglycan that seems to be implicated in diverse developmental roles such as differentiation, cell-cell recognition, embryogenesis and programmed cell death. This is Classical arabinogalactan protein 1 (AGP1) from Arabidopsis thaliana (Mouse-ear cress).